Consider the following 219-residue polypeptide: Large ribosomal subunit protein uL3 (219 aa).

The interval 133–153 (GRASHGNSRSHNVPGSIGMAQ) is disordered. Gln-153 bears the N5-methylglutamine mark.

Belongs to the universal ribosomal protein uL3 family. In terms of assembly, part of the 50S ribosomal subunit. Forms a cluster with proteins L14 and L19. Methylated by PrmB.

In terms of biological role, one of the primary rRNA binding proteins, it binds directly near the 3'-end of the 23S rRNA, where it nucleates assembly of the 50S subunit. The protein is Large ribosomal subunit protein uL3 of Burkholderia thailandensis (strain ATCC 700388 / DSM 13276 / CCUG 48851 / CIP 106301 / E264).